The following is a 932-amino-acid chain: Chaperone protein ClpC3, chloroplastic (932 aa).

The interval 1-20 (MERTLLNPPPSLRSPACRTT) is disordered. A chloroplast-targeting transit peptide spans 1–48 (MERTLLNPPPSLRSPACRTTTATRIRPSSSMATMIPTPPPMRHARLVK). The region spanning 99–240 (FDMFTDKAIK…RSEVIRMISD (142 aa)) is the Clp R domain. Repeat stretches follow at residues 102–167 (FTDK…AGRG) and 177–240 (FTPA…MISD). The i stretch occupies residues 264 to 511 (LLEYGTNLTK…LVRLRNAQLP (248 aa)). Position 309–316 (309–316 (GEPGVGKT)) interacts with ATP. The UVR domain maps to 518–553 (EKKLKKIMAEKSEAIRSQDFEKAGALRGEEVELKSE). The interval 579–770 (VTEADVQHIV…LIIMTSNVGS (192 aa)) is II. Residue 653 to 660 (GPTGVGKS) participates in ATP binding.

It belongs to the ClpA/ClpB family. ClpC subfamily.

It localises to the plastid. Its subcellular location is the chloroplast. Functionally, molecular chaperone that may interact with a ClpP-like protease involved in degradation of denatured proteins in the chloroplast. This is Chaperone protein ClpC3, chloroplastic (CLPC3) from Oryza sativa subsp. japonica (Rice).